A 274-amino-acid polypeptide reads, in one-letter code: Large ribosomal subunit protein uL2 (274 aa).

2 disordered regions span residues 37–60 and 224–252; these read QHQK…GHKH and AMNP…WGNL. Positions 50 to 60 are enriched in basic residues; that stretch reads TTRHKGGGHKH. The span at 229–246 shows a compositional bias: basic and acidic residues; sequence DHPHGGGEGRTGEGRHAV.

This sequence belongs to the universal ribosomal protein uL2 family. Part of the 50S ribosomal subunit. Forms a bridge to the 30S subunit in the 70S ribosome.

Functionally, one of the primary rRNA binding proteins. Required for association of the 30S and 50S subunits to form the 70S ribosome, for tRNA binding and peptide bond formation. It has been suggested to have peptidyltransferase activity; this is somewhat controversial. Makes several contacts with the 16S rRNA in the 70S ribosome. The polypeptide is Large ribosomal subunit protein uL2 (Paracidovorax citrulli (strain AAC00-1) (Acidovorax citrulli)).